Here is a 274-residue protein sequence, read N- to C-terminus: Hydroxyethylthiazole kinase (274 aa).

Methionine 51 contributes to the substrate binding site. ATP-binding residues include arginine 127 and serine 173. Glycine 200 provides a ligand contact to substrate.

The protein belongs to the Thz kinase family. It depends on Mg(2+) as a cofactor.

It catalyses the reaction 5-(2-hydroxyethyl)-4-methylthiazole + ATP = 4-methyl-5-(2-phosphooxyethyl)-thiazole + ADP + H(+). It functions in the pathway cofactor biosynthesis; thiamine diphosphate biosynthesis; 4-methyl-5-(2-phosphoethyl)-thiazole from 5-(2-hydroxyethyl)-4-methylthiazole: step 1/1. Functionally, catalyzes the phosphorylation of the hydroxyl group of 4-methyl-5-beta-hydroxyethylthiazole (THZ). This is Hydroxyethylthiazole kinase from Photobacterium profundum (strain SS9).